The sequence spans 673 residues: Methionine--tRNA ligase (673 aa).

The 'HIGH' region signature appears at 14–24 (YYPSGKLHIGN). The short motif at 310 to 314 (KMSKS) is the 'KMSKS' region element. K313 is an ATP binding site. The tRNA-binding domain maps to 571-673 (VFDKVELKVA…SEAPNGSSIS (103 aa)).

It belongs to the class-I aminoacyl-tRNA synthetase family. MetG type 2B subfamily. Homodimer.

It localises to the cytoplasm. The catalysed reaction is tRNA(Met) + L-methionine + ATP = L-methionyl-tRNA(Met) + AMP + diphosphate. In terms of biological role, is required not only for elongation of protein synthesis but also for the initiation of all mRNA translation through initiator tRNA(fMet) aminoacylation. The protein is Methionine--tRNA ligase (metG) of Oceanobacillus iheyensis (strain DSM 14371 / CIP 107618 / JCM 11309 / KCTC 3954 / HTE831).